The chain runs to 183 residues: Translocon-associated protein subunit beta (183 aa).

A signal peptide spans 1 to 17; that stretch reads MRLLAFAVLALFAVTQA. The Lumenal segment spans residues 18–146; sequence EEGARLLASK…REFDRRFSPH (129 aa). N-linked (GlcNAc...) asparagine glycosylation is present at N88. A helical membrane pass occupies residues 147–167; sequence FLDWAAFGVMTLPSIGVPLLL. The Cytoplasmic segment spans residues 168–183; it reads WYSSKRKYDTPKTKKN.

The protein belongs to the TRAP-beta family. As to quaternary structure, heterotetramer of TRAP-alpha, TRAP-beta, TRAP-delta and TRAP-gamma. Interacts with STING1.

It is found in the endoplasmic reticulum membrane. In terms of biological role, TRAP proteins are part of a complex whose function is to bind calcium to the ER membrane and thereby regulate the retention of ER resident proteins. The sequence is that of Translocon-associated protein subunit beta (SSR2) from Bos taurus (Bovine).